Here is a 758-residue protein sequence, read N- to C-terminus: 5-methyltetrahydropteroyltriglutamate--homocysteine methyltransferase (758 aa).

5-methyltetrahydropteroyltri-L-glutamate-binding positions include 17–20 and K117; that span reads RELK. L-homocysteine-binding positions include 434 to 436 and E487; that span reads IGS. L-methionine-binding positions include 434-436 and E487; that span reads IGS. Residues 518-519 and W564 each bind 5-methyltetrahydropteroyltri-L-glutamate; that span reads RC. D602 provides a ligand contact to L-homocysteine. D602 is a binding site for L-methionine. E608 serves as a coordination point for 5-methyltetrahydropteroyltri-L-glutamate. H644, C646, and E668 together coordinate Zn(2+). H697 functions as the Proton donor in the catalytic mechanism. C729 is a Zn(2+) binding site.

It belongs to the vitamin-B12 independent methionine synthase family. The cofactor is Zn(2+).

It catalyses the reaction 5-methyltetrahydropteroyltri-L-glutamate + L-homocysteine = tetrahydropteroyltri-L-glutamate + L-methionine. It participates in amino-acid biosynthesis; L-methionine biosynthesis via de novo pathway; L-methionine from L-homocysteine (MetE route): step 1/1. Catalyzes the transfer of a methyl group from 5-methyltetrahydrofolate to homocysteine resulting in methionine formation. This chain is 5-methyltetrahydropteroyltriglutamate--homocysteine methyltransferase, found in Serratia proteamaculans (strain 568).